The sequence spans 470 residues: MTMAKTLYEKVFDAHVVYEGKNELPILYIDRHLIHEVTSPQAFSGLKMAKRRMARADLTLATIDHDVSTKSMDLNACSDMAKEQITTLMQNTKEFGVRLLGLGDKNQGIVHIVGPELGFTLPGVTLVCGDSHTATHGAFGALAFGIGTSEVEHVMATQTLKQAKLKTMKIECKGQFQKGVYTKDLILYLIAQYGTAKGTGYAIEFCGELIRNLSMEARMTLCNMAIEFGAKVGMIAPDEITFEYIKGKEFAPKGEEFQKYCEYWKSLRSDEGAKYDASITLDVSKIKPQISYGTNPSQVIGIDEKIPKISDFKNQSEQKSLLDALYYVNLEQDQVIEGVKIDIVFIGSCTNGRLEDLKIAADILKGRKIHKNVKALIVPGSMQVRKEAENLGLDKIFIEAGCEWRYAGCSMCLGMNDDKANSGQRVASTSNRNFVGRQGKGSITHLMSPASAAACAIEGVICDNRKYLGV.

Residues C349, C409, and C412 each coordinate [4Fe-4S] cluster.

This sequence belongs to the aconitase/IPM isomerase family. LeuC type 1 subfamily. As to quaternary structure, heterodimer of LeuC and LeuD. It depends on [4Fe-4S] cluster as a cofactor.

The enzyme catalyses (2R,3S)-3-isopropylmalate = (2S)-2-isopropylmalate. It functions in the pathway amino-acid biosynthesis; L-leucine biosynthesis; L-leucine from 3-methyl-2-oxobutanoate: step 2/4. Its function is as follows. Catalyzes the isomerization between 2-isopropylmalate and 3-isopropylmalate, via the formation of 2-isopropylmaleate. The sequence is that of 3-isopropylmalate dehydratase large subunit from Campylobacter jejuni subsp. jejuni serotype O:2 (strain ATCC 700819 / NCTC 11168).